Here is a 212-residue protein sequence, read N- to C-terminus: LexA repressor (212 aa).

A DNA-binding region (H-T-H motif) is located at residues 26–46 (VREIGEAVGLSSTSTVHGHID). Active-site for autocatalytic cleavage activity residues include S128 and K171.

The protein belongs to the peptidase S24 family. Homodimer.

The catalysed reaction is Hydrolysis of Ala-|-Gly bond in repressor LexA.. Functionally, represses a number of genes involved in the response to DNA damage (SOS response), including recA and lexA. In the presence of single-stranded DNA, RecA interacts with LexA causing an autocatalytic cleavage which disrupts the DNA-binding part of LexA, leading to derepression of the SOS regulon and eventually DNA repair. The polypeptide is LexA repressor (Oenococcus oeni (strain ATCC BAA-331 / PSU-1)).